A 178-amino-acid polypeptide reads, in one-letter code: Ribosome maturation factor RimM (178 aa).

The region spanning 101-178 (ADEYYWYQLV…VMRVEWDADF (78 aa)) is the PRC barrel domain.

The protein belongs to the RimM family. Binds ribosomal protein uS19.

It is found in the cytoplasm. Functionally, an accessory protein needed during the final step in the assembly of 30S ribosomal subunit, possibly for assembly of the head region. Essential for efficient processing of 16S rRNA. May be needed both before and after RbfA during the maturation of 16S rRNA. It has affinity for free ribosomal 30S subunits but not for 70S ribosomes. The chain is Ribosome maturation factor RimM from Pseudomonas putida (strain ATCC 47054 / DSM 6125 / CFBP 8728 / NCIMB 11950 / KT2440).